A 262-amino-acid chain; its full sequence is Hydroxyethylthiazole kinase (262 aa).

Residue methionine 39 coordinates substrate. Positions 115 and 160 each coordinate ATP. Substrate is bound at residue glycine 187.

It belongs to the Thz kinase family. Mg(2+) is required as a cofactor.

It catalyses the reaction 5-(2-hydroxyethyl)-4-methylthiazole + ATP = 4-methyl-5-(2-phosphooxyethyl)-thiazole + ADP + H(+). The protein operates within cofactor biosynthesis; thiamine diphosphate biosynthesis; 4-methyl-5-(2-phosphoethyl)-thiazole from 5-(2-hydroxyethyl)-4-methylthiazole: step 1/1. Functionally, catalyzes the phosphorylation of the hydroxyl group of 4-methyl-5-beta-hydroxyethylthiazole (THZ). The polypeptide is Hydroxyethylthiazole kinase (Staphylococcus epidermidis (strain ATCC 12228 / FDA PCI 1200)).